The primary structure comprises 395 residues: Zinc finger protein HD1 (395 aa).

Residues 30-72 (PWARPCDGCRAAPSVVYCRADAAYLCASCDARVHAANRVASRH) form a B box-type 1; atypical zinc finger. Cys-35, Cys-38, Cys-58, His-63, Cys-78, Cys-81, Cys-101, and His-106 together coordinate Zn(2+). The B box-type 2; atypical zinc finger occupies 73 to 117 (ERVRVCEACERAPAALACRADAAALCVACDVQVHSANPLPAITIP). Disordered regions lie at residues 147–176 (SKDS…SNNG) and 208–228 (GMHE…EFAE). The segment covering 152-175 (NNNNNNNNNDNDNNDNNNSNSSNN) has biased composition (low complexity). The region spanning 326–368 (REARVLRYREKKKARKFEKTIRYETRKAYAEARPRIKGRFAKR) is the CCT domain.

This sequence belongs to the CONSTANS family. As to quaternary structure, interacts with HAL3 in the dark. In terms of processing, phosphorylated by OSK4 in the presence of HDR1.

The protein localises to the nucleus. Functionally, probable transcription factor involved in the regulation of flower development. Required for the promotion of flowering under short day (SD) conditions and the suppression of flowering under long day (LD) conditions. Positively regulates the floral activator HEADING DATE 3a (HD3A) under SD and negatively under LD conditions. This Oryza sativa subsp. japonica (Rice) protein is Zinc finger protein HD1.